We begin with the raw amino-acid sequence, 1430 residues long: Gag-Pol polyprotein (1430 aa).

Residue G2 is the site of N-myristoyl glycine; by host attachment. The tract at residues 7 to 31 (VLSGGKLDAWEKIRLKPGGKKRYRL) is interaction with Gp41. The tract at residues 8-43 (LSGGKLDAWEKIRLKPGGKKRYRLKHLVWASRELER) is interaction with host CALM1. The interaction with host AP3D1 stretch occupies residues 12–19 (KLDAWEKI). The segment at 14–33 (DAWEKIRLKPGGKKRYRLKH) is interaction with membrane phosphatidylinositol 4,5-bisphosphate and RNA. The Nuclear export signal motif lies at 16–22 (WEKIRLK). The short motif at 26–32 (KKRYRLK) is the Nuclear localization signal element. Residues 73–77 (EELKS) are interaction with membrane phosphatidylinositol 4,5-bisphosphate. Positions 105–124 (QEEQDKSQQKEQQKAADKEV) are disordered. Y128 carries the phosphotyrosine; by host modification. The interval 185-223 (NTVGGHQAAMQMLKDTINEEAAEWDRLHPVHAGPIPPGQ) is interaction with human PPIA/CYPA and NUP153. Residues 273-359 (YSPVSILDIK…GGPGHKARIL (87 aa)) are dimerization/Multimerization of capsid protein p24. 2 CCHC-type zinc fingers span residues 385–402 (VKCF…NCRA) and 406–423 (KGCW…DCTE). The tract at residues 440-479 (ARKFSSEQTRANSPASRELRVRRGDNPLPEAGAERRGTGS) is disordered. Residues 445–454 (SEQTRANSPA) show a composition bias toward polar residues. The segment at 484-488 (PQITL) is dimerization of protease. The Peptidase A2 domain maps to 503–572 (REALLDTGAD…TPVNIIGRNL (70 aa)). The active-site For protease activity; shared with dimeric partner is D508. Dimerization of protease regions lie at residues 532-538 (GIGGFIK) and 571-583 (NLLT…LNFP). Positions 626–816 (EGKISKIGPE…PPFLWMGYEL (191 aa)) constitute a Reverse transcriptase domain. D692, D767, and D768 together coordinate Mg(2+). The RT 'primer grip' stretch occupies residues 809–817 (FLWMGYELH). The Tryptophan repeat motif signature appears at 980 to 996 (WEIWWTEYWQATWIPEW). An RNase H type-1 domain is found at 1016–1139 (IAGAETFYVD…VDKLVSSGIR (124 aa)). Mg(2+) contacts are provided by D1025, E1060, D1080, and D1131. Residues 1145–1186 (DGIDKAQEEHEKYHNNWRAMASDFNLPPVVAKEIVANCDKCQ) form an Integrase-type zinc finger. 4 residues coordinate Zn(2+): H1154, H1158, C1182, and C1185. The region spanning 1196-1346 (VDCSPGIWQL…SAGERIIDII (151 aa)) is the Integrase catalytic domain. Residues D1206, D1258, and E1294 each contribute to the Mg(2+) site. The integrase-type DNA-binding region spans 1365-1412 (FRVYFRDSRDPVWKGPAKLLWKGEGAVVIQDNNEIKVVPRRKAKIIRD).

Homotrimer; further assembles as hexamers of trimers. Interacts with gp41 (via C-terminus). Interacts with host CALM1; this interaction induces a conformational change in the Matrix protein, triggering exposure of the myristate group. Interacts with host AP3D1; this interaction allows the polyprotein trafficking to multivesicular bodies during virus assembly. Part of the pre-integration complex (PIC) which is composed of viral genome, matrix protein, Vpr and integrase. As to quaternary structure, homodimer; the homodimer further multimerizes as homohexamers or homopentamers. Interacts with human PPIA/CYPA; This interaction stabilizes the capsid. Interacts with human NUP153. Interacts with host PDZD8; this interaction stabilizes the capsid. Interacts with monkey TRIM5; this interaction destabilizes the capsid. In terms of assembly, homodimer, whose active site consists of two apposed aspartic acid residues. Heterodimer of p66 RT and p51 RT (RT p66/p51). Heterodimerization of RT is essential for DNA polymerase activity. The overall folding of the subdomains is similar in p66 RT and p51 RT but the spatial arrangements of the subdomains are dramatically different. As to quaternary structure, homotetramer; may further associate as a homohexadecamer. Part of the pre-integration complex (PIC) which is composed of viral genome, matrix protein, Vpr and integrase. Interacts with human SMARCB1/INI1 and human PSIP1/LEDGF isoform 1. Interacts with human KPNA3; this interaction might play a role in nuclear import of the pre-integration complex. Interacts with human NUP153; this interaction might play a role in nuclear import of the pre-integration complex. Requires Mg(2+) as cofactor. Post-translationally, specific enzymatic cleavages by the viral protease yield mature proteins. The protease is released by autocatalytic cleavage. The polyprotein is cleaved during and after budding, this process is termed maturation. Proteolytic cleavage of p66 RT removes the RNase H domain to yield the p51 RT subunit. Nucleocapsid protein p7 might be further cleaved after virus entry. In terms of processing, tyrosine phosphorylated presumably in the virion by a host kinase. Phosphorylation is apparently not a major regulator of membrane association. Phosphorylated possibly by host MAPK1; this phosphorylation is necessary for Pin1-mediated virion uncoating. Post-translationally, methylated by host PRMT6, impairing its function by reducing RNA annealing and the initiation of reverse transcription.

It is found in the host cell membrane. It localises to the host endosome. The protein resides in the host multivesicular body. Its subcellular location is the virion membrane. The protein localises to the host nucleus. It is found in the host cytoplasm. It localises to the virion. The catalysed reaction is Specific for a P1 residue that is hydrophobic, and P1' variable, but often Pro.. The enzyme catalyses Endohydrolysis of RNA in RNA/DNA hybrids. Three different cleavage modes: 1. sequence-specific internal cleavage of RNA. Human immunodeficiency virus type 1 and Moloney murine leukemia virus enzymes prefer to cleave the RNA strand one nucleotide away from the RNA-DNA junction. 2. RNA 5'-end directed cleavage 13-19 nucleotides from the RNA end. 3. DNA 3'-end directed cleavage 15-20 nucleotides away from the primer terminus.. It catalyses the reaction 3'-end directed exonucleolytic cleavage of viral RNA-DNA hybrid.. It carries out the reaction DNA(n) + a 2'-deoxyribonucleoside 5'-triphosphate = DNA(n+1) + diphosphate. Its activity is regulated as follows. Protease: The viral protease is inhibited by many synthetic protease inhibitors (PIs), such as amprenavir, atazanavir, indinavir, loprinavir, nelfinavir, ritonavir and saquinavir. Use of protease inhibitors in tritherapy regimens permit more ambitious therapeutic strategies. Reverse transcriptase/ribonuclease H: RT can be inhibited either by nucleoside RT inhibitors (NRTIs) or by non nucleoside RT inhibitors (NNRTIs). NRTIs act as chain terminators, whereas NNRTIs inhibit DNA polymerization by binding a small hydrophobic pocket near the RT active site and inducing an allosteric change in this region. Classical NRTIs are abacavir, adefovir (PMEA), didanosine (ddI), lamivudine (3TC), stavudine (d4T), tenofovir (PMPA), zalcitabine (ddC), and zidovudine (AZT). Classical NNRTIs are atevirdine (BHAP U-87201E), delavirdine, efavirenz (DMP-266), emivirine (I-EBU), and nevirapine (BI-RG-587). The tritherapies used as a basic effective treatment of AIDS associate two NRTIs and one NNRTI. In terms of biological role, mediates, with Gag polyprotein, the essential events in virion assembly, including binding the plasma membrane, making the protein-protein interactions necessary to create spherical particles, recruiting the viral Env proteins, and packaging the genomic RNA via direct interactions with the RNA packaging sequence (Psi). Gag-Pol polyprotein may regulate its own translation, by the binding genomic RNA in the 5'-UTR. At low concentration, the polyprotein would promote translation, whereas at high concentration, the polyprotein would encapsidate genomic RNA and then shut off translation. Targets the polyprotein to the plasma membrane via a multipartite membrane-binding signal, that includes its myristoylated N-terminus. Matrix protein is part of the pre-integration complex. Implicated in the release from host cell mediated by Vpu. Binds to RNA. Functionally, forms the conical core that encapsulates the genomic RNA-nucleocapsid complex in the virion. Most core are conical, with only 7% tubular. The core is constituted by capsid protein hexamer subunits. The core is disassembled soon after virion entry. Host restriction factors such as TRIM5-alpha or TRIMCyp bind retroviral capsids and cause premature capsid disassembly, leading to blocks in reverse transcription. Capsid restriction by TRIM5 is one of the factors which restricts HIV-1 to the human species. Host PIN1 apparently facilitates the virion uncoating. On the other hand, interactions with PDZD8 or CYPA stabilize the capsid. Its function is as follows. Encapsulates and protects viral dimeric unspliced genomic RNA (gRNA). Binds these RNAs through its zinc fingers. Acts as a nucleic acid chaperone which is involved in rearangement of nucleic acid secondary structure during gRNA retrotranscription. Also facilitates template switch leading to recombination. As part of the polyprotein, participates in gRNA dimerization, packaging, tRNA incorporation and virion assembly. In terms of biological role, aspartyl protease that mediates proteolytic cleavages of Gag and Gag-Pol polyproteins during or shortly after the release of the virion from the plasma membrane. Cleavages take place as an ordered, step-wise cascade to yield mature proteins. This process is called maturation. Displays maximal activity during the budding process just prior to particle release from the cell. Also cleaves Nef and Vif, probably concomitantly with viral structural proteins on maturation of virus particles. Hydrolyzes host EIF4GI and PABP1 in order to shut off the capped cellular mRNA translation. The resulting inhibition of cellular protein synthesis serves to ensure maximal viral gene expression and to evade host immune response. Also mediates cleavage of host YTHDF3. Mediates cleavage of host CARD8, thereby activating the CARD8 inflammasome, leading to the clearance of latent HIV-1 in patient CD4(+) T-cells after viral reactivation; in contrast, HIV-1 can evade CARD8-sensing when its protease remains inactive in infected cells prior to viral budding. Multifunctional enzyme that converts the viral RNA genome into dsDNA in the cytoplasm, shortly after virus entry into the cell. This enzyme displays a DNA polymerase activity that can copy either DNA or RNA templates, and a ribonuclease H (RNase H) activity that cleaves the RNA strand of RNA-DNA heteroduplexes in a partially processive 3' to 5' endonucleasic mode. Conversion of viral genomic RNA into dsDNA requires many steps. A tRNA(3)-Lys binds to the primer-binding site (PBS) situated at the 5'-end of the viral RNA. RT uses the 3' end of the tRNA primer to perform a short round of RNA-dependent minus-strand DNA synthesis. The reading proceeds through the U5 region and ends after the repeated (R) region which is present at both ends of viral RNA. The portion of the RNA-DNA heteroduplex is digested by the RNase H, resulting in a ssDNA product attached to the tRNA primer. This ssDNA/tRNA hybridizes with the identical R region situated at the 3' end of viral RNA. This template exchange, known as minus-strand DNA strong stop transfer, can be either intra- or intermolecular. RT uses the 3' end of this newly synthesized short ssDNA to perform the RNA-dependent minus-strand DNA synthesis of the whole template. RNase H digests the RNA template except for two polypurine tracts (PPTs) situated at the 5'-end and near the center of the genome. It is not clear if both polymerase and RNase H activities are simultaneous. RNase H probably can proceed both in a polymerase-dependent (RNA cut into small fragments by the same RT performing DNA synthesis) and a polymerase-independent mode (cleavage of remaining RNA fragments by free RTs). Secondly, RT performs DNA-directed plus-strand DNA synthesis using the PPTs that have not been removed by RNase H as primers. PPTs and tRNA primers are then removed by RNase H. The 3' and 5' ssDNA PBS regions hybridize to form a circular dsDNA intermediate. Strand displacement synthesis by RT to the PBS and PPT ends produces a blunt ended, linear dsDNA copy of the viral genome that includes long terminal repeats (LTRs) at both ends. Functionally, catalyzes viral DNA integration into the host chromosome, by performing a series of DNA cutting and joining reactions. This enzyme activity takes place after virion entry into a cell and reverse transcription of the RNA genome in dsDNA. The first step in the integration process is 3' processing. This step requires a complex comprising the viral genome, matrix protein, Vpr and integrase. This complex is called the pre-integration complex (PIC). The integrase protein removes 2 nucleotides from each 3' end of the viral DNA, leaving recessed CA OH's at the 3' ends. In the second step, the PIC enters cell nucleus. This process is mediated through integrase and Vpr proteins, and allows the virus to infect a non dividing cell. This ability to enter the nucleus is specific of lentiviruses, other retroviruses cannot and rely on cell division to access cell chromosomes. In the third step, termed strand transfer, the integrase protein joins the previously processed 3' ends to the 5' ends of strands of target cellular DNA at the site of integration. The 5'-ends are produced by integrase-catalyzed staggered cuts, 5 bp apart. A Y-shaped, gapped, recombination intermediate results, with the 5'-ends of the viral DNA strands and the 3' ends of target DNA strands remaining unjoined, flanking a gap of 5 bp. The last step is viral DNA integration into host chromosome. This involves host DNA repair synthesis in which the 5 bp gaps between the unjoined strands are filled in and then ligated. Since this process occurs at both cuts flanking the HIV genome, a 5 bp duplication of host DNA is produced at the ends of HIV-1 integration. Alternatively, Integrase may catalyze the excision of viral DNA just after strand transfer, this is termed disintegration. The protein is Gag-Pol polyprotein (gag-pol) of Human immunodeficiency virus type 1 group M subtype F2 (isolate MP255) (HIV-1).